A 360-amino-acid chain; its full sequence is Inhibin alpha chain (360 aa).

An N-terminal signal peptide occupies residues 1–17; sequence MWLQLLLLLLAPQGGHG. Positions 18 to 60 are excised as a propeptide; that stretch reads CHGLELDRELVLAKVRALFLDALGPPPVTGEGGDPGVRRLHRR. The propeptide at 61 to 226 is inhibin alpha N-terminal region; the sequence is HAVGGFMRRG…PPSGGERARR (166 aa). N-linked (GlcNAc...) asparagine glycosylation is found at N140 and N262. Disulfide bonds link C256–C322, C285–C357, and C289–C359.

The protein belongs to the TGF-beta family. Dimeric, linked by one or more disulfide bonds. Activin B is a dimer of alpha and beta-B. Inhibin A is a dimer of alpha and beta-A. Inhibin B is a dimer of alpha and beta-B. Interacts with TGFBR3L; this interaction regulates female fertility. Proteolytic processing yields a number of bioactive forms, consisting either solely of the mature alpha chain, of the most N-terminal propeptide linked through a disulfide bond to the mature alpha chain, or of the entire proprotein.

It localises to the secreted. In terms of biological role, inhibins and activins inhibit and activate, respectively, the secretion of follitropin by the pituitary gland. Inhibins/activins are involved in regulating a number of diverse functions such as hypothalamic and pituitary hormone secretion, gonadal hormone secretion, germ cell development and maturation, erythroid differentiation, insulin secretion, nerve cell survival, embryonic axial development or bone growth, depending on their subunit composition. Inhibins appear to oppose the functions of activins. Its function is as follows. Inhibin A is a dimer of alpha/INHA and beta-A/INHBA that functions as a feedback regulator in the hypothalamic-pituitary-gonadal (HPG) axis. Inhibits the secretion of FSH from the anterior pituitary gland by acting on pituitary gonadotrope cells. Antagonizes activin A by binding to the proteoglycan, betaglycan, and forming a stable complex with and, thereby, sequestering type II activin receptors while excluding type I receptor. Inhibin B is a dimer of alpha and beta-B that plays a crucial role in the regulation of the reproductive system by inhibiting the secretion of follicle-stimulating hormone (FSH) from the anterior pituitary gland. Thereby, maintains reproductive homeostasis in both males and females. Acts as a more potent suppressor of FSH release than inhibin A. Functions as competitive receptor antagonist binding activin type II receptors with high affinity in the presence of the TGF-beta type III coreceptor/TGFBR3L. This Bos taurus (Bovine) protein is Inhibin alpha chain (INHA).